The primary structure comprises 290 residues: Small ribosomal subunit biogenesis GTPase RsgA (290 aa).

The 152-residue stretch at Lys-62–Leu-213 folds into the CP-type G domain. GTP contacts are provided by residues Ser-111–Asp-114 and Gly-156–Thr-164. Positions 237, 242, 244, and 250 each coordinate Zn(2+).

This sequence belongs to the TRAFAC class YlqF/YawG GTPase family. RsgA subfamily. In terms of assembly, monomer. Associates with 30S ribosomal subunit, binds 16S rRNA. The cofactor is Zn(2+).

The protein localises to the cytoplasm. Its function is as follows. One of several proteins that assist in the late maturation steps of the functional core of the 30S ribosomal subunit. Helps release RbfA from mature subunits. May play a role in the assembly of ribosomal proteins into the subunit. Circularly permuted GTPase that catalyzes slow GTP hydrolysis, GTPase activity is stimulated by the 30S ribosomal subunit. The chain is Small ribosomal subunit biogenesis GTPase RsgA from Streptococcus pyogenes serotype M3 (strain ATCC BAA-595 / MGAS315).